Reading from the N-terminus, the 477-residue chain is Enolase 1, chloroplastic (477 aa).

The transit peptide at 1–41 (MALTTKPHHLQRSFLSPSRVSGERYLESAPSCLRFRRSGVQ) directs the protein to the chloroplast. Residues His-203 and Glu-212 each coordinate substrate. The active-site Proton donor is the Glu-255. The Mg(2+) site is built by Asp-290, Glu-340, and Asp-365. Residues Glu-340 and Asp-365 each coordinate substrate. The Proton acceptor role is filled by Lys-390. Residues 417 to 420 (SHRS) and Lys-441 each bind substrate. At Ser-476 the chain carries Phosphoserine.

It belongs to the enolase family. The cofactor is Mg(2+). Highly expressed in young roots, young siliques, and shoot apex. Lowly expressed in young leaves, stems and cotyledons.

Its subcellular location is the plastid. It localises to the chloroplast. The enzyme catalyses (2R)-2-phosphoglycerate = phosphoenolpyruvate + H2O. It participates in carbohydrate degradation; glycolysis; pyruvate from D-glyceraldehyde 3-phosphate: step 4/5. This is Enolase 1, chloroplastic (ENO1) from Arabidopsis thaliana (Mouse-ear cress).